Reading from the N-terminus, the 268-residue chain is Imidazole glycerol phosphate synthase subunit HisF (268 aa).

Active-site residues include Asp-12 and Asp-131.

This sequence belongs to the HisA/HisF family. As to quaternary structure, heterodimer of HisH and HisF.

The protein localises to the cytoplasm. It catalyses the reaction 5-[(5-phospho-1-deoxy-D-ribulos-1-ylimino)methylamino]-1-(5-phospho-beta-D-ribosyl)imidazole-4-carboxamide + L-glutamine = D-erythro-1-(imidazol-4-yl)glycerol 3-phosphate + 5-amino-1-(5-phospho-beta-D-ribosyl)imidazole-4-carboxamide + L-glutamate + H(+). It functions in the pathway amino-acid biosynthesis; L-histidine biosynthesis; L-histidine from 5-phospho-alpha-D-ribose 1-diphosphate: step 5/9. IGPS catalyzes the conversion of PRFAR and glutamine to IGP, AICAR and glutamate. The HisF subunit catalyzes the cyclization activity that produces IGP and AICAR from PRFAR using the ammonia provided by the HisH subunit. The polypeptide is Imidazole glycerol phosphate synthase subunit HisF (Methanocorpusculum labreanum (strain ATCC 43576 / DSM 4855 / Z)).